The primary structure comprises 594 residues: UvrABC system protein C (594 aa).

Residues 13–99 (NSSGVYQYFD…IKQLKPKYNI (87 aa)) enclose the GIY-YIG domain. A UVR domain is found at 205-240 (DRLIKELELKMERLSSKLRFEEALIYRDRIAKIQKI).

It belongs to the UvrC family. In terms of assembly, interacts with UvrB in an incision complex.

It localises to the cytoplasm. In terms of biological role, the UvrABC repair system catalyzes the recognition and processing of DNA lesions. UvrC both incises the 5' and 3' sides of the lesion. The N-terminal half is responsible for the 3' incision and the C-terminal half is responsible for the 5' incision. In Helicobacter pylori (strain P12), this protein is UvrABC system protein C.